The chain runs to 97 residues: MKIEVNNELISRLQNLALVELNDREKERIKRDIKNILDFFDQINKLDLSNVEPLFHPISTGKLRKDEIIKPLSRDEALSNVKRKEDGFIVGPATYGE.

Belongs to the GatC family. Heterotrimer of A, B and C subunits.

The catalysed reaction is L-glutamyl-tRNA(Gln) + L-glutamine + ATP + H2O = L-glutaminyl-tRNA(Gln) + L-glutamate + ADP + phosphate + H(+). It carries out the reaction L-aspartyl-tRNA(Asn) + L-glutamine + ATP + H2O = L-asparaginyl-tRNA(Asn) + L-glutamate + ADP + phosphate + 2 H(+). Functionally, allows the formation of correctly charged Asn-tRNA(Asn) or Gln-tRNA(Gln) through the transamidation of misacylated Asp-tRNA(Asn) or Glu-tRNA(Gln) in organisms which lack either or both of asparaginyl-tRNA or glutaminyl-tRNA synthetases. The reaction takes place in the presence of glutamine and ATP through an activated phospho-Asp-tRNA(Asn) or phospho-Glu-tRNA(Gln). The sequence is that of Glutamyl-tRNA(Gln) amidotransferase subunit C from Sulfurisphaera tokodaii (strain DSM 16993 / JCM 10545 / NBRC 100140 / 7) (Sulfolobus tokodaii).